Reading from the N-terminus, the 147-residue chain is MMKRNELKQLQELQLKINDFYTLVMTTKNLDLCNLSALLEFLGINWGVWVNLSTQRDEFNKKRYEYITKANYGLRMALNELLGRNASYDKEINNQGLRKFRTQEYFKRLDFELANEQKSTDIEDTTITFEKVDDNNKLTIKKLINVI.

This is an uncharacterized protein from Ureaplasma parvum serovar 3 (strain ATCC 700970).